A 280-amino-acid polypeptide reads, in one-letter code: MDLYNNKNSDTSKIKRDASVNDRIPDGLFLACPYCGAQMYNKQLGKYRVCAKCNYGFRLQAWERVELLTKNFEEMDSDIQMDHPEFPGYAEKLKRAQSQTELAESVLTGTADIEGEQVALGIMDSYFMMGSLGSMTGEKITRLFEYATAHTLPVVLFTASGGARMQEGIDSLMQMAKVSAAVAAHQEAKLLYLVVLTDPTTGGVTASFAMQGDVTLAEPHALVGFAGARVIESTIHEKLPKDFQRVETLLENGFVDQIVPRSELAQLIAKIVRLHTAEAE.

The region spanning 28–280 is the CoA carboxyltransferase N-terminal domain; the sequence is LFLACPYCGA…IVRLHTAEAE (253 aa). Zn(2+) is bound by residues cysteine 32, cysteine 35, cysteine 50, and cysteine 53. The C4-type zinc-finger motif lies at 32 to 53; sequence CPYCGAQMYNKQLGKYRVCAKC.

The protein belongs to the AccD/PCCB family. As to quaternary structure, acetyl-CoA carboxylase is a heterohexamer composed of biotin carboxyl carrier protein (AccB), biotin carboxylase (AccC) and two subunits each of ACCase subunit alpha (AccA) and ACCase subunit beta (AccD). Zn(2+) is required as a cofactor.

The protein resides in the cytoplasm. It catalyses the reaction N(6)-carboxybiotinyl-L-lysyl-[protein] + acetyl-CoA = N(6)-biotinyl-L-lysyl-[protein] + malonyl-CoA. It functions in the pathway lipid metabolism; malonyl-CoA biosynthesis; malonyl-CoA from acetyl-CoA: step 1/1. In terms of biological role, component of the acetyl coenzyme A carboxylase (ACC) complex. Biotin carboxylase (BC) catalyzes the carboxylation of biotin on its carrier protein (BCCP) and then the CO(2) group is transferred by the transcarboxylase to acetyl-CoA to form malonyl-CoA. This Leuconostoc mesenteroides subsp. mesenteroides (strain ATCC 8293 / DSM 20343 / BCRC 11652 / CCM 1803 / JCM 6124 / NCDO 523 / NBRC 100496 / NCIMB 8023 / NCTC 12954 / NRRL B-1118 / 37Y) protein is Acetyl-coenzyme A carboxylase carboxyl transferase subunit beta.